The following is a 902-amino-acid chain: MAASAAAAGEGMEPRALQYEQTLMYGRYTQELGAFAKEEAARIRLGGPEPWKGPPSPRVPPELLEYGQSRCAPCCICSVRCHKFLVSRVGEDWIFLVLLGLLMALVSWAMDYAIAVCLQAQQWMSQGLNTNILLQYLAWVTYPVVLITFSAGFTQILAPQAVGSGIPEMKTILRGVVLKEYLTLKTFVAKVIGLTCALGSGMPLGKEGPFVHIASMCASLLSKFLSLFGGIYENESRNTEMLAAACAVGVGCCFAAPIGGVLFSIEVTSTFFAVRNYWRGFFSATFSAFIFRVLAVWNRDEETITALFKTRFRLDFPFDLQELPAFAVIGIASGFGGALFVYLNRKIVQVMRKQKTINRFLMRKRLLFPALVTLLISTLTFPPGFGQFMAGQLSQKETLVTLFDNRTWVHQGLVEEQEPPSTSQAWNPPRANVFLTLVIFILMKFWMSALATTIPVPCGAFMPVFVIGAAFGRLVGESMAAWFPDGIHTDGSTYRIVPGGYAVVGAAALAGAVTHTVSTAVIVFELTGQIAHILPVMIAVILANAVAQSLQPSLYDSIIRIKKLPYLPELGWGRHQQYRVRVEDIMVRDVPYVALNCTFRDLRLALHRTKGRMLALVESSESMILLGSIERSQVVTLLGAQLSAARRRQHIQERRKAQMSPPSDQDGLPSPESSVHFQVNTEDSAFIPARGETHKPLKPALKRGPSNASKAGETSTGSMESAGIALRSLFCGSPPPEATSDLEKPESCERRKLKRVRISLANDADLEGEMSPEEILEWEEQQLNEPVNFSDCKIDPAPFQLVERTSLHKTHTIFSLLGVDHAYVTSIGRLIGIVTLKELRKAIEGSVTAQGVKVRPPLASFRDSATSSSDTETTEVHALWGPHSCHGLPRDGSPSDSDDKCQ.

The Cytoplasmic segment spans residues 1-89 (MAASAAAAGE…RCHKFLVSRV (89 aa)). An essential for channel gating by both voltage and cell volume region spans residues 18–36 (QYEQTLMYGRYTQELGAFA). Thr22 is subject to Phosphothreonine. Positions 38–51 (EEAARIRLGGPEPW) are modulates channel gating by both voltage and cell volume. 2 helical membrane passes run 90–123 (GEDWIFLVLLGLLMALVSWAMDYAIAVCLQAQQW) and 132–157 (ILLQYLAWVTYPVVLITFSAGFTQIL). The short motif at 163–167 (GSGIP) is the Selectivity filter part_1 element. The segment at residues 166–173 (IPEMKTIL) is an intramembrane region (helical). Transmembrane regions (helical) follow at residues 182 to 200 (LTLKTFVAKVIGLTCALGS) and 207 to 225 (EGPFVHIASMCASLLSKFL). The short motif at 205–209 (GKEGP) is the Selectivity filter part_2 element. Intramembrane regions (helical) lie at residues 241-253 (MLAAACAVGVGCC) and 257-265 (PIGGVLFSI). The next 5 helical transmembrane spans lie at 277–297 (YWRGFFSATFSAFIFRVLAVW), 323–351 (LPAFAVIGIASGFGGALFVYLNRKIVQVM), 360–379 (FLMRKRLLFPALVTLLISTL), 431–451 (ANVFLTLVIFILMKFWMSALA), and 459–482 (GAFMPVFVIGAAFGRLVGESMAAW). The short motif at 459–463 (GAFMP) is the Selectivity filter part_3 element. Residues 499–513 (GGYAVVGAAALAGAV) constitute an intramembrane region (helical). The segment at residues 514-515 (TH) is an intramembrane region (note=Loop between two helices). Residues 516–527 (TVSTAVIVFELT) constitute an intramembrane region (helical). The segment at residues 528-532 (GQIAH) is an intramembrane region (note=Loop between two helices). The chain crosses the membrane as a helical span at residues 533 to 550 (ILPVMIAVILANAVAQSL). At 551–902 (QPSLYDSIIR…SPSDSDDKCQ (352 aa)) the chain is on the cytoplasmic side. Residues 586-644 (MVRDVPYVALNCTFRDLRLALHRTKGRMLALVESSESMILLGSIERSQVVTLLGAQLSA) enclose the CBS 1 domain. Residues 648-748 (RQHIQERRKA…TSDLEKPESC (101 aa)) are disordered. 2 stretches are compositionally biased toward polar residues: residues 671–683 (PESSVHFQVNTED) and 706–719 (SNASKAGETSTGSM). Residues 794 to 854 (IDPAPFQLVE…GSVTAQGVKV (61 aa)) enclose the CBS 2 domain. The Basolateral membrane sorting signature appears at 816-817 (LL). The segment at 860 to 902 (SFRDSATSSSDTETTEVHALWGPHSCHGLPRDGSPSDSDDKCQ) is disordered.

Belongs to the chloride channel (TC 2.A.49) family. ClC-2/CLCN2 subfamily. As to quaternary structure, homodimer. Interacts with auxiliary subunit HEPACAM.

Its subcellular location is the cell membrane. The protein localises to the basolateral cell membrane. The protein resides in the cell projection. It localises to the dendritic spine membrane. It is found in the axon. It carries out the reaction chloride(in) = chloride(out). It catalyses the reaction thiocyanate(in) = thiocyanate(out). The enzyme catalyses bromide(in) = bromide(out). The catalysed reaction is nitrate(in) = nitrate(out). It carries out the reaction iodide(out) = iodide(in). Its activity is regulated as follows. Common gate kinetics are down-regulated by intracellular ATP. Inhibited by AK-42, a derivative of meclofenamate. Inhibited by Cd(2+). Inhibited by Zn(2+) and PKC activation. Inhibited at acidic pH. CCLN2:HEPACAM channel conductance is up-regulated upon hypo-osmolarity. In terms of biological role, voltage-gated and osmosensitive chloride channel. Forms a homodimeric channel where each subunit has its own ion conduction pathway. Conducts double-barreled currents controlled by two types of gates, two fast glutamate gates that control each subunit independently and a slow common gate that opens and shuts off both subunits simultaneously. Displays inward rectification currents activated upon membrane hyperpolarization and extracellular hypotonicity. Contributes to chloride conductance involved in neuron excitability. In hippocampal neurons, generates a significant part of resting membrane conductance and provides an additional chloride efflux pathway to prevent chloride accumulation in dendrites upon GABA receptor activation. In glia, associates with the auxiliary subunit HEPACAM/GlialCAM at astrocytic processes and myelinated fiber tracts where it may regulate transcellular chloride flux buffering extracellular chloride and potassium concentrations. Regulates aldosterone production in adrenal glands. The opening of CLCN2 channels at hyperpolarized membrane potentials in the glomerulosa causes cell membrane depolarization, activation of voltage-gated calcium channels and increased expression of aldosterone synthase, the rate-limiting enzyme for aldosterone biosynthesis. Contributes to chloride conductance in retinal pigment epithelium involved in phagocytosis of shed photoreceptor outer segments and photoreceptor renewal. Conducts chloride currents at the basolateral membrane of epithelial cells with a role in chloride reabsorption rather than secretion. Permeable to small monovalent anions with chloride &gt; thiocyanate &gt; bromide &gt; nitrate &gt; iodide ion selectivity. This Cavia porcellus (Guinea pig) protein is Chloride channel protein 2 (CLCN2).